The chain runs to 317 residues: Olfactory receptor 10AD1 (317 aa).

At 1 to 25 (MLRNGSIVTEFILVGFQQSSTSTRA) the chain is on the extracellular side. Asn4 is a glycosylation site (N-linked (GlcNAc...) asparagine). The chain crosses the membrane as a helical span at residues 26–46 (LLFALFLALYSLTMAMNGLII). The Cytoplasmic segment spans residues 47–55 (FITSWTDPK). The helical transmembrane segment at 56-76 (LNSPMYFFLGHLSLLDVCFIT) threads the bilayer. At 77-100 (TTIPQMLIHLVVRDHIVSFVCCMT) the chain is on the extracellular side. An intrachain disulfide couples Cys98 to Cys190. A helical transmembrane segment spans residues 101–121 (QMYFVFCVGVAECILLAFMAY). The Cytoplasmic portion of the chain corresponds to 122–140 (DRYVAICYPLNYVPIISQK). The helical transmembrane segment at 141-161 (VCVRLVGTAWFFGLINGIFLE) threads the bilayer. Residues 162 to 198 (YISFREPFRRDNHIESFFCEAPIVIGLSCGDPQFSLW) are Extracellular-facing. Residues 199–218 (AIFADAIVVILSPMVLTVTS) traverse the membrane as a helical segment. Over 219 to 238 (YVHILATILSKASSSGRGKT) the chain is Cytoplasmic. The chain crosses the membrane as a helical span at residues 239 to 259 (FSTCASHLTVVIFLYTSAMFS). Topologically, residues 260–272 (YMNPHSTHGPDKD) are extracellular. Residues 273–293 (KPFSLLYTIITPMCNPIIYSF) form a helical membrane-spanning segment. Over 294 to 317 (RNKEIKEAMVRALGRTRLAQPQSV) the chain is Cytoplasmic.

This sequence belongs to the G-protein coupled receptor 1 family.

It is found in the cell membrane. Odorant receptor. In Homo sapiens (Human), this protein is Olfactory receptor 10AD1 (OR10AD1).